A 152-amino-acid chain; its full sequence is Protein Smg homolog (152 aa).

This sequence belongs to the Smg family.

This is Protein Smg homolog from Bordetella petrii (strain ATCC BAA-461 / DSM 12804 / CCUG 43448).